Consider the following 244-residue polypeptide: Ribonuclease 3 (244 aa).

Positions 5 to 136 (LAELERAIGI…LVGAIYLDQG (132 aa)) constitute an RNase III domain. Residue E49 participates in Mg(2+) binding. D53 is an active-site residue. Mg(2+) is bound by residues D122 and E125. E125 is a catalytic residue. In terms of domain architecture, DRBM spans 161–229 (DPTTRLQELM…ARKALAAWDK (69 aa)).

It belongs to the ribonuclease III family. As to quaternary structure, homodimer. Mg(2+) serves as cofactor.

It localises to the cytoplasm. It carries out the reaction Endonucleolytic cleavage to 5'-phosphomonoester.. In terms of biological role, digests double-stranded RNA. Involved in the processing of primary rRNA transcript to yield the immediate precursors to the large and small rRNAs (23S and 16S). Processes some mRNAs, and tRNAs when they are encoded in the rRNA operon. Processes pre-crRNA and tracrRNA of type II CRISPR loci if present in the organism. This is Ribonuclease 3 from Chloroflexus aurantiacus (strain ATCC 29364 / DSM 637 / Y-400-fl).